A 226-amino-acid polypeptide reads, in one-letter code: Enolase-phosphatase E1 (226 aa).

It belongs to the HAD-like hydrolase superfamily. MasA/MtnC family. In terms of assembly, monomer. Mg(2+) is required as a cofactor.

It carries out the reaction 5-methylsulfanyl-2,3-dioxopentyl phosphate + H2O = 1,2-dihydroxy-5-(methylsulfanyl)pent-1-en-3-one + phosphate. The protein operates within amino-acid biosynthesis; L-methionine biosynthesis via salvage pathway; L-methionine from S-methyl-5-thio-alpha-D-ribose 1-phosphate: step 3/6. It participates in amino-acid biosynthesis; L-methionine biosynthesis via salvage pathway; L-methionine from S-methyl-5-thio-alpha-D-ribose 1-phosphate: step 4/6. Bifunctional enzyme that catalyzes the enolization of 2,3-diketo-5-methylthiopentyl-1-phosphate (DK-MTP-1-P) into the intermediate 2-hydroxy-3-keto-5-methylthiopentenyl-1-phosphate (HK-MTPenyl-1-P), which is then dephosphorylated to form the acireductone 1,2-dihydroxy-3-keto-5-methylthiopentene (DHK-MTPene). This is Enolase-phosphatase E1 from Shewanella frigidimarina (strain NCIMB 400).